A 214-amino-acid chain; its full sequence is 3,4-dihydroxy-2-butanone 4-phosphate synthase (214 aa).

Residues 37 to 38 (RE), Asp42, 150 to 154 (RRGHT), and Glu174 each bind D-ribulose 5-phosphate. Residue Glu38 coordinates Mg(2+). His153 serves as a coordination point for Mg(2+).

This sequence belongs to the DHBP synthase family. Homodimer. Mg(2+) serves as cofactor. It depends on Mn(2+) as a cofactor.

The catalysed reaction is D-ribulose 5-phosphate = (2S)-2-hydroxy-3-oxobutyl phosphate + formate + H(+). It functions in the pathway cofactor biosynthesis; riboflavin biosynthesis; 2-hydroxy-3-oxobutyl phosphate from D-ribulose 5-phosphate: step 1/1. Catalyzes the conversion of D-ribulose 5-phosphate to formate and 3,4-dihydroxy-2-butanone 4-phosphate. In Desulfotalea psychrophila (strain LSv54 / DSM 12343), this protein is 3,4-dihydroxy-2-butanone 4-phosphate synthase.